We begin with the raw amino-acid sequence, 307 residues long: Putative F-box protein PP2-B6 (307 aa).

One can recognise an F-box domain in the interval 42-88; it reads HSPFDDLPEDCISNIISFTSPRDVCVSASVSKSFAHAVQCDSIWEKF.

This is Putative F-box protein PP2-B6 (PP2B6) from Arabidopsis thaliana (Mouse-ear cress).